The primary structure comprises 101 residues: Small ribosomal subunit protein bS6 (101 aa).

The protein belongs to the bacterial ribosomal protein bS6 family.

Functionally, binds together with bS18 to 16S ribosomal RNA. This is Small ribosomal subunit protein bS6 from Paenarthrobacter aurescens (strain TC1).